The primary structure comprises 937 residues: Calsyntenin-2 (937 aa).

The N-terminal stretch at 1–22 (MKMRAITAMLLLVLSGQCGILA) is a signal peptide. The Extracellular segment spans residues 23–818 (GKVNKHKPWI…NSDHISGTPP (796 aa)). 2 Cadherin domains span residues 32–148 (IETS…SPVF) and 149–249 (REPL…KPGW). Asn-86 carries an N-linked (GlcNAc...) asparagine glycan. N-linked (GlcNAc...) asparagine glycosylation is found at Asn-330, Asn-365, and Asn-716. A helical transmembrane segment spans residues 819–839 (AATVVIVMCIAALVVIVVLGI). The Cytoplasmic portion of the chain corresponds to 840–937 (YRIHTTHQDS…LEWDPSTLPY (98 aa)). The disordered stretch occupies residues 846–937 (HQDSSKEDEE…LEWDPSTLPY (92 aa)). Polar residues predominate over residues 865–874 (DNSNLNSIEG). 2 stretches are compositionally biased toward acidic residues: residues 881–900 (VREE…DDLA) and 907–917 (ESEDSDEDEET).

Belongs to the calsyntenin family. In terms of assembly, homooligomer and heterooligomer; mediates both homophilic and heterophilc interactions with clstn1 and clstn3 paralogs via cadherin domains. By 48 hours post-fertilization (hpf), widely expressed in the brain, with strong expression in the telencephalon and the midbrain.

The protein resides in the postsynaptic cell membrane. It is found in the endoplasmic reticulum membrane. Its subcellular location is the golgi apparatus membrane. It localises to the cell projection. The protein localises to the dendrite. Postsynaptic adhesion molecule. Promotes synapse development by acting as a cell adhesion molecule at the postsynaptic membrane, which associates with presynaptic neurexins. This is Calsyntenin-2 (clstn2a) from Danio rerio (Zebrafish).